The following is a 343-amino-acid chain: Glyceraldehyde-3-phosphate dehydrogenase (343 aa).

NAD(+) contacts are provided by residues 13 to 14 and glycine 111; that span reads TI. Residue 140–142 participates in D-glyceraldehyde 3-phosphate binding; the sequence is SCN. Cysteine 141 functions as the Nucleophile in the catalytic mechanism. Residue arginine 169 coordinates NAD(+). 195 to 196 contributes to the D-glyceraldehyde 3-phosphate binding site; it reads HA. Glutamine 303 contributes to the NAD(+) binding site.

The protein belongs to the glyceraldehyde-3-phosphate dehydrogenase family. In terms of assembly, homotetramer.

The protein resides in the cytoplasm. The catalysed reaction is D-glyceraldehyde 3-phosphate + phosphate + NADP(+) = (2R)-3-phospho-glyceroyl phosphate + NADPH + H(+). It carries out the reaction D-glyceraldehyde 3-phosphate + phosphate + NAD(+) = (2R)-3-phospho-glyceroyl phosphate + NADH + H(+). Its pathway is carbohydrate degradation; glycolysis; pyruvate from D-glyceraldehyde 3-phosphate: step 1/5. The chain is Glyceraldehyde-3-phosphate dehydrogenase from Sulfolobus acidocaldarius (strain ATCC 33909 / DSM 639 / JCM 8929 / NBRC 15157 / NCIMB 11770).